The following is a 200-amino-acid chain: Pyridoxal 5'-phosphate synthase subunit PdxT (200 aa).

L-glutamine is bound at residue 46-48; it reads GES. The active-site Nucleophile is the Cys78. Residues Arg107 and 138–139 contribute to the L-glutamine site; that span reads IR. Residues His175 and Glu177 each act as charge relay system in the active site.

It belongs to the glutaminase PdxT/SNO family. In the presence of PdxS, forms a dodecamer of heterodimers. Only shows activity in the heterodimer.

It carries out the reaction aldehydo-D-ribose 5-phosphate + D-glyceraldehyde 3-phosphate + L-glutamine = pyridoxal 5'-phosphate + L-glutamate + phosphate + 3 H2O + H(+). It catalyses the reaction L-glutamine + H2O = L-glutamate + NH4(+). It functions in the pathway cofactor biosynthesis; pyridoxal 5'-phosphate biosynthesis. In terms of biological role, catalyzes the hydrolysis of glutamine to glutamate and ammonia as part of the biosynthesis of pyridoxal 5'-phosphate. The resulting ammonia molecule is channeled to the active site of PdxS. The chain is Pyridoxal 5'-phosphate synthase subunit PdxT from Corynebacterium glutamicum (strain R).